We begin with the raw amino-acid sequence, 441 residues long: Zinc finger and BTB domain-containing protein 26 (441 aa).

The BTB domain occupies 33–97; sequence CDVTVLIDDI…CYSGVLEFPE (65 aa). Residues 134 to 177 are disordered; the sequence is DSKEGCEPQSASPQSKEQQGDARGSPKQDSPCIHPSEDSMDMED. Lys184 participates in a covalent cross-link: Glycyl lysine isopeptide (Lys-Gly) (interchain with G-Cter in SUMO2). The interval 194–216 is disordered; the sequence is VRSKKDQNQFISSEPTALHSSEP. A compositionally biased stretch (polar residues) spans 201-216; that stretch reads NQFISSEPTALHSSEP. Lys255 participates in a covalent cross-link: Glycyl lysine isopeptide (Lys-Gly) (interchain with G-Cter in SUMO2). C2H2-type zinc fingers lie at residues 273-295, 298-320, 326-348, and 354-377; these read HQCPKCTRVFRHLENYANHLKMH, FMCLLCGKTFTQKGNLHRHMRVH, FQCKICGKTFSQKCSLQDHLNLH, and HKCNYCDMVFAHKPVLRKHLKQLH. Residue Lys329 forms a Glycyl lysine isopeptide (Lys-Gly) (interchain with G-Cter in SUMO2) linkage.

In terms of tissue distribution, ubiquitous.

The protein resides in the nucleus. Its function is as follows. May be involved in transcriptional regulation. In Homo sapiens (Human), this protein is Zinc finger and BTB domain-containing protein 26 (ZBTB26).